The sequence spans 74 residues: UPF0346 protein PEPE_1063 (74 aa).

This sequence belongs to the UPF0346 family.

In Pediococcus pentosaceus (strain ATCC 25745 / CCUG 21536 / LMG 10740 / 183-1w), this protein is UPF0346 protein PEPE_1063.